The sequence spans 120 residues: uncharacterized protein (120 aa).

Positions 1 to 19 (MTSFAVVARLITRAPRVRA) are cleaved as a signal peptide. 2 disordered regions span residues 48 to 71 (VAKK…DKAK) and 90 to 120 (DTVT…KNLK). A compositionally biased stretch (basic and acidic residues) spans 90–103 (DTVTGKTEETKESI).

This is an uncharacterized protein from Arabidopsis thaliana (Mouse-ear cress).